The primary structure comprises 140 residues: ATP synthase epsilon chain (140 aa).

The protein belongs to the ATPase epsilon chain family. In terms of assembly, F-type ATPases have 2 components, CF(1) - the catalytic core - and CF(0) - the membrane proton channel. CF(1) has five subunits: alpha(3), beta(3), gamma(1), delta(1), epsilon(1). CF(0) has three main subunits: a, b and c.

The protein localises to the cell inner membrane. Functionally, produces ATP from ADP in the presence of a proton gradient across the membrane. The sequence is that of ATP synthase epsilon chain from Neisseria gonorrhoeae (strain ATCC 700825 / FA 1090).